The sequence spans 66 residues: Defensin-B1 (66 aa).

A signal peptide spans 1–23 (MNAHVLLLCTILFLLVHTPPVLG). 3 cysteine pairs are disulfide-bonded: Cys-29–Cys-56, Cys-36–Cys-50, and Cys-40–Cys-57. Positions 61-66 (VLMEDG) are excised as a propeptide.

It belongs to the beta-defensin family. As to expression, expressed at low levels in kidney, lung, and spleen.

It is found in the secreted. Functionally, has bactericidal activity. May act as a ligand for C-C chemokine receptor CCR6. Positively regulates the sperm motility and bactericidal activity in a CCR6-dependent manner. Binds to CCR6 and triggers Ca2+ mobilization in the sperm which is important for its motility. This is Defensin-B1 from Ornithorhynchus anatinus (Duckbill platypus).